The following is a 320-amino-acid chain: Acetyl-coenzyme A carboxylase carboxyl transferase subunit alpha (320 aa).

A CoA carboxyltransferase C-terminal domain is found at 42–295 (IEDKAKAALH…GDAIAQAFSD (254 aa)).

It belongs to the AccA family. As to quaternary structure, acetyl-CoA carboxylase is a heterohexamer composed of biotin carboxyl carrier protein (AccB), biotin carboxylase (AccC) and two subunits each of ACCase subunit alpha (AccA) and ACCase subunit beta (AccD).

Its subcellular location is the cytoplasm. It carries out the reaction N(6)-carboxybiotinyl-L-lysyl-[protein] + acetyl-CoA = N(6)-biotinyl-L-lysyl-[protein] + malonyl-CoA. Its pathway is lipid metabolism; malonyl-CoA biosynthesis; malonyl-CoA from acetyl-CoA: step 1/1. In terms of biological role, component of the acetyl coenzyme A carboxylase (ACC) complex. First, biotin carboxylase catalyzes the carboxylation of biotin on its carrier protein (BCCP) and then the CO(2) group is transferred by the carboxyltransferase to acetyl-CoA to form malonyl-CoA. This Afipia carboxidovorans (strain ATCC 49405 / DSM 1227 / KCTC 32145 / OM5) (Oligotropha carboxidovorans) protein is Acetyl-coenzyme A carboxylase carboxyl transferase subunit alpha.